Here is a 136-residue protein sequence, read N- to C-terminus: Large ribosomal subunit protein eL27 (136 aa).

Residues 5-40 (MKPGKVVMVLAGRYAGRKAVIVKNIDDGTADRPYSH) form the KOW domain.

The protein belongs to the eukaryotic ribosomal protein eL27 family. As to quaternary structure, component of the large ribosomal subunit.

It localises to the cytoplasm. It is found in the cytosol. Its subcellular location is the rough endoplasmic reticulum. Functionally, component of the large ribosomal subunit. The protein is Large ribosomal subunit protein eL27 (rpl27) of Danio rerio (Zebrafish).